Reading from the N-terminus, the 640-residue chain is Chaperone protein DnaK (640 aa).

Position 196 is a phosphothreonine; by autocatalysis (Thr-196). Disordered stretches follow at residues 487–526 (GKEQSIKIESSSKLTDAEISKMKEDAKEHAAEDQKRKEEI) and 593–640 (SHLY…GNDK). Residues 501 to 526 (TDAEISKMKEDAKEHAAEDQKRKEEI) are compositionally biased toward basic and acidic residues. The segment covering 595–613 (LYQSQGPESSQPETAAQSD) has biased composition (polar residues). A compositionally biased stretch (acidic residues) spans 630–640 (AEYEVIDGNDK).

Belongs to the heat shock protein 70 family.

Its function is as follows. Acts as a chaperone. This chain is Chaperone protein DnaK, found in Pelodictyon phaeoclathratiforme (strain DSM 5477 / BU-1).